A 238-amino-acid polypeptide reads, in one-letter code: Ribosomal RNA small subunit methyltransferase G (238 aa).

S-adenosyl-L-methionine is bound by residues Gly-77, Phe-82, 128-129, and Arg-147; that span reads AE.

It belongs to the methyltransferase superfamily. RNA methyltransferase RsmG family.

Its subcellular location is the cytoplasm. Functionally, specifically methylates the N7 position of guanine in position 535 of 16S rRNA. The chain is Ribosomal RNA small subunit methyltransferase G from Geobacillus sp. (strain WCH70).